The following is a 388-amino-acid chain: Succinate--CoA ligase [ADP-forming] subunit beta (388 aa).

Residues Lys9 to Lys245 enclose the ATP-grasp domain. ATP-binding positions include Lys46, Gly53–Gly55, Glu100, Tyr103, and Glu108. Positions 200 and 214 each coordinate Mg(2+). Residues Asn265 and Gly322–Val324 each bind substrate.

It belongs to the succinate/malate CoA ligase beta subunit family. In terms of assembly, heterotetramer of two alpha and two beta subunits. Mg(2+) is required as a cofactor.

It carries out the reaction succinate + ATP + CoA = succinyl-CoA + ADP + phosphate. It catalyses the reaction GTP + succinate + CoA = succinyl-CoA + GDP + phosphate. Its pathway is carbohydrate metabolism; tricarboxylic acid cycle; succinate from succinyl-CoA (ligase route): step 1/1. Functionally, succinyl-CoA synthetase functions in the citric acid cycle (TCA), coupling the hydrolysis of succinyl-CoA to the synthesis of either ATP or GTP and thus represents the only step of substrate-level phosphorylation in the TCA. The beta subunit provides nucleotide specificity of the enzyme and binds the substrate succinate, while the binding sites for coenzyme A and phosphate are found in the alpha subunit. The polypeptide is Succinate--CoA ligase [ADP-forming] subunit beta (Neisseria gonorrhoeae (strain ATCC 700825 / FA 1090)).